The following is a 1895-amino-acid chain: 1,3-beta-glucan synthase component GSC2 (1895 aa).

Composition is skewed to polar residues over residues 1 to 16 and 25 to 34; these read MSYN…YSNG and PTYQVTQDQS. Disordered regions lie at residues 1 to 143 and 269 to 292; these read MSYN…PYGN and ARKA…EETL. The Extracellular portion of the chain corresponds to 1-473; the sequence is MSYNDPNLNG…WLHLVTNFNR (473 aa). Low complexity predominate over residues 65–78; it reads QFPQGQDPSQDQGP. Composition is skewed to polar residues over residues 79–107 and 115–141; these read YNND…SDFS and TYPN…STPY. Basic residues predominate over residues 269–278; it reads ARKAKKKNKK. Lys278 participates in a covalent cross-link: Glycyl lysine isopeptide (Lys-Gly) (interchain with G-Cter in ubiquitin). Phosphothreonine is present on residues Thr288 and Thr291. Lys405 is covalently cross-linked (Glycyl lysine isopeptide (Lys-Gly) (interchain with G-Cter in ubiquitin)). The helical transmembrane segment at 474 to 494 threads the bilayer; the sequence is IWIMHISVYWMYCAYNAPTFY. Residues 495-511 lie on the Cytoplasmic side of the membrane; sequence THNYQQLVDNQPLAAYK. A helical transmembrane segment spans residues 512-532; it reads WATAALGGTVASLIQVAATLC. Residues 533 to 550 lie on the Extracellular side of the membrane; sequence EWSFVPRKWAGAQHLSRR. The chain crosses the membrane as a helical span at residues 551–571; it reads FWFLCVIMGINLGPVIFVFAY. Residues 572–582 are Cytoplasmic-facing; that stretch reads DKDTVYSTAAH. The helical transmembrane segment at 583-603 threads the bilayer; it reads VVGAVMFFVAVATLVFFSVMP. Topologically, residues 604-1579 are extracellular; the sequence is LGGLFTSYMK…DASRAHRTNL (976 aa). Residues Lys929, Lys934, Lys1558, and Lys1566 each participate in a glycyl lysine isopeptide (Lys-Gly) (interchain with G-Cter in ubiquitin) cross-link. A helical transmembrane segment spans residues 1580 to 1600; sequence IMAEIIPCAIYAAGCFIAFTF. Topologically, residues 1601–1620 are cytoplasmic; it reads INAQTGVKTTDEDRVNSTLR. A helical transmembrane segment spans residues 1621–1641; it reads IIICTLAPIVIDIGVLFFCMG. The Extracellular portion of the chain corresponds to 1642–1758; the sequence is LSCCSGPLLG…LTAKVIELSE (117 aa). The chain crosses the membrane as a helical span at residues 1759-1779; sequence FAADFVLGHVILIFQLPVICI. Residues 1780 to 1821 lie on the Cytoplasmic side of the membrane; that stretch reads PKIDKFHSIMLFWLKPSRQIRPPIYSLKQARLRKRMVRRYCS. A helical transmembrane segment spans residues 1822-1842; it reads LYFLVLIIFAGCIVGPAVASA. Residues 1843–1895 lie on the Extracellular side of the membrane; sequence HVPKDLGSGLTGTFHNLVQPRNVSNNDTGSQMSTYKSHYYTHTPSLKTWSTIK.

Belongs to the glycosyltransferase 48 family. In terms of assembly, component of the 1,3-beta-glucan synthase (GS) complex, composed of two alternate catalytic subunits FKS1 or GSC2, and a regulatory subunit RHO1. Interacts with SMK1.

The protein localises to the membrane. It carries out the reaction [(1-&gt;3)-beta-D-glucosyl](n) + UDP-alpha-D-glucose = [(1-&gt;3)-beta-D-glucosyl](n+1) + UDP + H(+). In terms of biological role, alternate catalytic subunit of the 1,3-beta-glucan synthase (GS) complex. Synthesizes 1,3-beta-glucan, a major structural component of the yeast cell wall. Required for spore wall assembly. Negative regulation of activity by SMK1 is important for spore wall deposition. Activity is positively regulated by RHO1. The protein is 1,3-beta-glucan synthase component GSC2 of Saccharomyces cerevisiae (strain ATCC 204508 / S288c) (Baker's yeast).